A 628-amino-acid polypeptide reads, in one-letter code: MSNGLPISIGRPCTHDSQRSLSASDSRIHSRFDSLLDTDLPMVHSEGTSAPTQLLRHPNIWFGNIPPPPRRPQDNRDFSPLHPLVFPGHHSQLRHVHETQQVQQTCPGELKLSGIEELPPAPQRQHSLPLHITRPSRFPHHFHARRPDVLPSLPDHGPVLAETKPRTSVRQPRSTTRGPSFRPILLPEVVHVHDDPPHSSLRPGRSRSRQLQPTIRRPLLAPNQFNSPRQPPPLSDDPGILGPCPLAPNSTRDPPPRPITPGPFNTHGVRPLSVLPRAPPRRGLLPNPRRHRTSTGHIPSTTASRPTGPPSRLQRPVHLHQSGPHTPDFRPSGIRKDAFLQTGPRLGHLERLGQSADLRTSERTPSTKRRLPRPSEPNCLPSSLPEATLAPSYRHRRSHPLLPNPPAALPPIAYTSGRGKIHHSLPKGALPKEGPPPPPRRLPSPATPPQSPLRDLGRTPSFPTPPKTSTRAPESCIAAPPTDIAPLDSDPVLSVRTEVHAPERRTFMDPEALRAALAGLPSPPLSVGIIRTASQTVLPTNSPSPTRHLPPTSSPWILQSPVGEDAIVDSEDDSISSFHSHDFNSPSGPLRSQSPSRFRLHLRSPSTSSGIEPWSPASYDYGSAPDTD.

Disordered stretches follow at residues 1–24 (MSNG…LSAS), 141–492 (HFHA…SDPV), and 537–628 (VLPT…PDTD). Polar residues-rich tracts occupy residues 166 to 178 (RTSV…TTRG) and 295 to 305 (TGHIPSTTASR). The segment covering 433-451 (EGPPPPPRRLPSPATPPQS) has biased composition (pro residues). The segment covering 586–596 (PSGPLRSQSPS) has biased composition (polar residues).

The protein belongs to the tymoviridae protein p69 family.

In terms of biological role, acts as a suppressor of RNA-mediated gene silencing, also known as post-transcriptional gene silencing (PTGS), a mechanism of plant viral defense that limits the accumulation of viral RNAs. This Turnip yellow mosaic virus (isolate Australia) protein is 69 kDa protein.